The primary structure comprises 921 residues: AdoMet-dependent rRNA methyltransferase SPB1 (921 aa).

S-adenosyl-L-methionine is bound by residues Gly58, Trp60, Asp78, Asp94, and Asp119. The active-site Proton acceptor is Lys159. Positions 367 to 414 form a coiled coil; the sequence is VEEMDEDDQIDDELARLNEEAARKARKERRRKNELRQKKILKMQLQMT. Disordered stretches follow at residues 448–476, 491–604, 635–713, 814–835, and 866–921; these read ALIQ…DPET, EFKQ…KRSL, ELDE…GKQK, LEKA…EKEK, and RGLK…GPRN. Residues 491 to 522 show a composition bias toward basic and acidic residues; the sequence is EFKQKQSERDAKFRAKQARLQDAKNDSWHGIK. Composition is skewed to acidic residues over residues 523-542, 555-568, 635-684, and 697-708; these read DDEE…ESEG, ETFD…EEDE, ELDE…DDFE, and DEEWDLNGEDEE. Residues 796-835 are a coiled coil; it reads IKKVAEAKARKKMRTLRRLEKAQKKAETINENEDISEKEK. Residues 814-823 show a composition bias toward basic and acidic residues; sequence LEKAQKKAET. A compositionally biased stretch (basic residues) spans 868–879; the sequence is LKGRPKGTKGRY. A compositionally biased stretch (basic and acidic residues) spans 880–892; the sequence is KMVDPRMKKELRA.

The protein belongs to the class I-like SAM-binding methyltransferase superfamily. RNA methyltransferase RlmE family. SPB1 subfamily. Component of the nucleolar and nucleoplasmic pre-60S ribosomal particle.

The protein resides in the nucleus. Its subcellular location is the nucleolus. The enzyme catalyses a ribonucleotide in rRNA + S-adenosyl-L-methionine = a 2'-O-methylribonucleotide in rRNA + S-adenosyl-L-homocysteine + H(+). Its function is as follows. Required for proper assembly of pre-ribosomal particles during the biogenesis of the 60S ribosomal subunit. The polypeptide is AdoMet-dependent rRNA methyltransferase SPB1 (Mycosarcoma maydis (Corn smut fungus)).